Consider the following 456-residue polypeptide: Hydroxymethylglutaryl coenzyme A synthase (456 aa).

(3S)-3-hydroxy-3-methylglutaryl-CoA is bound at residue Ala-34. Glu-85 serves as the catalytic Proton donor/acceptor. Residues Cys-119, Thr-161, Ser-211, His-258, Lys-267, Asn-335, and Ser-369 each coordinate (3S)-3-hydroxy-3-methylglutaryl-CoA. The Acyl-thioester intermediate role is filled by Cys-119. His-258 (proton donor/acceptor) is an active-site residue.

This sequence belongs to the thiolase-like superfamily. HMG-CoA synthase family.

It catalyses the reaction acetoacetyl-CoA + acetyl-CoA + H2O = (3S)-3-hydroxy-3-methylglutaryl-CoA + CoA + H(+). In terms of biological role, HMG-CoA synthase; part of the gene cluster that mediates the biosynthesis of 1233A, a natural compound known as an inhibitor of HMG-CoA synthase in the mevalonate pathway and with antibacterial and antifungal activities. This enzyme condenses acetyl-CoA with acetoacetyl-CoA to form HMG-CoA, which is the substrate for HMG-CoA reductase. As part of the 1233A biosynthesis cluster, is involved in conferring self-resistance to 1233A. The protein is Hydroxymethylglutaryl coenzyme A synthase of Fusarium sp.